The chain runs to 302 residues: Oxygen-dependent coproporphyrinogen-III oxidase (302 aa).

Residue S94 participates in substrate binding. H98 and H108 together coordinate a divalent metal cation. Residue H108 is the Proton donor of the active site. 110-112 contributes to the substrate binding site; that stretch reads NVR. A divalent metal cation contacts are provided by H147 and H177. The important for dimerization stretch occupies residues 242–277; sequence YVEFNLVWDRGTLFGLQSGGRTESILMSMPPLARWE. 260-262 is a binding site for substrate; it reads GGR.

Belongs to the aerobic coproporphyrinogen-III oxidase family. Homodimer. A divalent metal cation is required as a cofactor.

The protein localises to the cytoplasm. It catalyses the reaction coproporphyrinogen III + O2 + 2 H(+) = protoporphyrinogen IX + 2 CO2 + 2 H2O. Its pathway is porphyrin-containing compound metabolism; protoporphyrin-IX biosynthesis; protoporphyrinogen-IX from coproporphyrinogen-III (O2 route): step 1/1. In terms of biological role, involved in the heme biosynthesis. Catalyzes the aerobic oxidative decarboxylation of propionate groups of rings A and B of coproporphyrinogen-III to yield the vinyl groups in protoporphyrinogen-IX. This chain is Oxygen-dependent coproporphyrinogen-III oxidase, found in Photorhabdus laumondii subsp. laumondii (strain DSM 15139 / CIP 105565 / TT01) (Photorhabdus luminescens subsp. laumondii).